The sequence spans 264 residues: Hydroxyethylthiazole kinase (264 aa).

Residue M43 coordinates substrate. ATP is bound by residues R119 and T165. G192 is a substrate binding site.

Belongs to the Thz kinase family. Mg(2+) is required as a cofactor.

It carries out the reaction 5-(2-hydroxyethyl)-4-methylthiazole + ATP = 4-methyl-5-(2-phosphooxyethyl)-thiazole + ADP + H(+). The protein operates within cofactor biosynthesis; thiamine diphosphate biosynthesis; 4-methyl-5-(2-phosphoethyl)-thiazole from 5-(2-hydroxyethyl)-4-methylthiazole: step 1/1. In terms of biological role, catalyzes the phosphorylation of the hydroxyl group of 4-methyl-5-beta-hydroxyethylthiazole (THZ). The protein is Hydroxyethylthiazole kinase of Anoxybacillus flavithermus (strain DSM 21510 / WK1).